The chain runs to 542 residues: Isocitrate lyase (542 aa).

102–104 (SGW) is a binding site for substrate. Asp170 lines the Mg(2+) pocket. Catalysis depends on Cys208, which acts as the Proton acceptor. Substrate-binding positions include 209–210 (GH), Arg245, 428–432 (NLSPS), and Thr462.

Belongs to the isocitrate lyase/PEP mutase superfamily. Isocitrate lyase family. In terms of assembly, homotetramer. The cofactor is Mg(2+).

The protein localises to the glyoxysome. The catalysed reaction is D-threo-isocitrate = glyoxylate + succinate. The enzyme catalyses (2S,3R)-3-hydroxybutane-1,2,3-tricarboxylate = pyruvate + succinate. It participates in carbohydrate metabolism; glyoxylate cycle; (S)-malate from isocitrate: step 1/2. In terms of biological role, catalyzes the formation of succinate and glyoxylate from isocitrate, a key step of the glyoxylate cycle, which operates as an anaplerotic route for replenishing the tricarboxylic acid cycle. Required for growth on ethanol or acetate, but dispensable when fermentable carbon sources are available. Also acts on 2-methylisocitrate. This Kluyveromyces lactis (strain ATCC 8585 / CBS 2359 / DSM 70799 / NBRC 1267 / NRRL Y-1140 / WM37) (Yeast) protein is Isocitrate lyase.